The following is a 431-amino-acid chain: Serine hydroxymethyltransferase (431 aa).

122 to 124 (GHI) lines the (6S)-5,6,7,8-tetrahydrofolate pocket. K228 carries the post-translational modification N6-(pyridoxal phosphate)lysine. E245 contributes to the (6S)-5,6,7,8-tetrahydrofolate binding site.

It belongs to the SHMT family. In terms of assembly, homodimer. Pyridoxal 5'-phosphate is required as a cofactor.

It is found in the cytoplasm. The protein operates within amino-acid biosynthesis; glycine biosynthesis; glycine from L-serine: step 1/1. Catalyzes the reversible interconversion of serine and glycine with a modified folate serving as the one-carbon carrier. Also exhibits a pteridine-independent aldolase activity toward beta-hydroxyamino acids, producing glycine and aldehydes, via a retro-aldol mechanism. This chain is Serine hydroxymethyltransferase, found in Thermococcus kodakarensis (strain ATCC BAA-918 / JCM 12380 / KOD1) (Pyrococcus kodakaraensis (strain KOD1)).